A 256-amino-acid polypeptide reads, in one-letter code: Acetylglutamate kinase (256 aa).

Substrate contacts are provided by residues 40–41, arginine 62, and asparagine 154; that span reads GG.

The protein belongs to the acetylglutamate kinase family. ArgB subfamily.

It localises to the cytoplasm. It carries out the reaction N-acetyl-L-glutamate + ATP = N-acetyl-L-glutamyl 5-phosphate + ADP. It functions in the pathway amino-acid biosynthesis; L-arginine biosynthesis; N(2)-acetyl-L-ornithine from L-glutamate: step 2/4. Functionally, catalyzes the ATP-dependent phosphorylation of N-acetyl-L-glutamate. The sequence is that of Acetylglutamate kinase from Staphylococcus aureus (strain MRSA252).